We begin with the raw amino-acid sequence, 299 residues long: Oxygen-dependent coproporphyrinogen-III oxidase (299 aa).

Residue Ser92 participates in substrate binding. A divalent metal cation is bound by residues His96 and His106. The Proton donor role is filled by His106. 108-110 (NVR) serves as a coordination point for substrate. A divalent metal cation is bound by residues His145 and His175. Residues 240–275 (YVEFNLVWDRGTLFGLQTGGRTESILMSMPPLVRWE) form an important for dimerization region. Residue 258 to 260 (GGR) coordinates substrate.

This sequence belongs to the aerobic coproporphyrinogen-III oxidase family. In terms of assembly, homodimer. A divalent metal cation serves as cofactor.

It is found in the cytoplasm. The catalysed reaction is coproporphyrinogen III + O2 + 2 H(+) = protoporphyrinogen IX + 2 CO2 + 2 H2O. The protein operates within porphyrin-containing compound metabolism; protoporphyrin-IX biosynthesis; protoporphyrinogen-IX from coproporphyrinogen-III (O2 route): step 1/1. Involved in the heme biosynthesis. Catalyzes the aerobic oxidative decarboxylation of propionate groups of rings A and B of coproporphyrinogen-III to yield the vinyl groups in protoporphyrinogen-IX. This Salmonella choleraesuis (strain SC-B67) protein is Oxygen-dependent coproporphyrinogen-III oxidase.